Reading from the N-terminus, the 252-residue chain is 14-3-3 protein 10 (252 aa).

It belongs to the 14-3-3 family. In terms of assembly, homodimer.

The polypeptide is 14-3-3 protein 10 (TFT10) (Solanum lycopersicum (Tomato)).